The following is a 243-amino-acid chain: DNA repair protein RecO (243 aa).

It belongs to the RecO family.

Involved in DNA repair and RecF pathway recombination. In Geobacter sulfurreducens (strain ATCC 51573 / DSM 12127 / PCA), this protein is DNA repair protein RecO.